A 258-amino-acid polypeptide reads, in one-letter code: MLFWNADPILIQLGPIAVHWYGALFATGFLLGYQLMQRIYRQEGRPTEQLDKLLTYIFIGTVVGARLAHTLIYEPEYYLAHPIDILKIWEGGLASHGGGIGVLLAIWLFVRQHPENKFLWLADRLAIPTALTGCFIRLGNFMNSEIIGNSTDGSWGVVFERIDTLPRHPVQLYEAASYFAIFVLLLMLFRTTKSKQTGFLFGLFLTLVFAARFIIEYFKTPQAAYEAGNLISVGQWLSVPFVLAGIVLMLLSAKEKAR.

7 consecutive transmembrane segments (helical) span residues 9-29, 53-73, 90-110, 117-139, 169-189, 198-218, and 230-250; these read ILIQ…ATGF, LLTY…TLIY, EGGL…WLFV, KFLW…IRLG, PVQL…LMLF, GFLF…IEYF, and LISV…VLML. R137 contributes to the a 1,2-diacyl-sn-glycero-3-phospho-(1'-sn-glycerol) binding site.

It belongs to the Lgt family.

Its subcellular location is the cell inner membrane. The enzyme catalyses L-cysteinyl-[prolipoprotein] + a 1,2-diacyl-sn-glycero-3-phospho-(1'-sn-glycerol) = an S-1,2-diacyl-sn-glyceryl-L-cysteinyl-[prolipoprotein] + sn-glycerol 1-phosphate + H(+). Its pathway is protein modification; lipoprotein biosynthesis (diacylglyceryl transfer). Catalyzes the transfer of the diacylglyceryl group from phosphatidylglycerol to the sulfhydryl group of the N-terminal cysteine of a prolipoprotein, the first step in the formation of mature lipoproteins. The chain is Phosphatidylglycerol--prolipoprotein diacylglyceryl transferase from Tolumonas auensis (strain DSM 9187 / NBRC 110442 / TA 4).